The primary structure comprises 469 residues: L-seryl-tRNA(Sec) selenium transferase (469 aa).

An N6-(pyridoxal phosphate)lysine modification is found at K295.

Belongs to the SelA family. The cofactor is pyridoxal 5'-phosphate.

The protein localises to the cytoplasm. It catalyses the reaction L-seryl-tRNA(Sec) + selenophosphate + H(+) = L-selenocysteinyl-tRNA(Sec) + phosphate. It participates in aminoacyl-tRNA biosynthesis; selenocysteinyl-tRNA(Sec) biosynthesis; selenocysteinyl-tRNA(Sec) from L-seryl-tRNA(Sec) (bacterial route): step 1/1. Converts seryl-tRNA(Sec) to selenocysteinyl-tRNA(Sec) required for selenoprotein biosynthesis. This Methylocella silvestris (strain DSM 15510 / CIP 108128 / LMG 27833 / NCIMB 13906 / BL2) protein is L-seryl-tRNA(Sec) selenium transferase.